A 126-amino-acid polypeptide reads, in one-letter code: Protein ApaG (126 aa).

One can recognise an ApaG domain in the interval 2–126 (DVSLPCIKIQ…FRLAVPHVLN (125 aa)).

The sequence is that of Protein ApaG from Vibrio cholerae serotype O1 (strain ATCC 39541 / Classical Ogawa 395 / O395).